Consider the following 398-residue polypeptide: Acetylornithine aminotransferase (398 aa).

Pyridoxal 5'-phosphate is bound by residues 105 to 106 (GA) and phenylalanine 138. A N(2)-acetyl-L-ornithine-binding site is contributed by arginine 141. 223–226 (DEVQ) is a pyridoxal 5'-phosphate binding site. An N6-(pyridoxal phosphate)lysine modification is found at lysine 252. Threonine 280 provides a ligand contact to N(2)-acetyl-L-ornithine. Position 281 (threonine 281) interacts with pyridoxal 5'-phosphate.

Belongs to the class-III pyridoxal-phosphate-dependent aminotransferase family. ArgD subfamily. In terms of assembly, homodimer. The cofactor is pyridoxal 5'-phosphate.

The protein localises to the cytoplasm. The enzyme catalyses N(2)-acetyl-L-ornithine + 2-oxoglutarate = N-acetyl-L-glutamate 5-semialdehyde + L-glutamate. It participates in amino-acid biosynthesis; L-arginine biosynthesis; N(2)-acetyl-L-ornithine from L-glutamate: step 4/4. This is Acetylornithine aminotransferase from Methanocaldococcus jannaschii (strain ATCC 43067 / DSM 2661 / JAL-1 / JCM 10045 / NBRC 100440) (Methanococcus jannaschii).